A 378-amino-acid chain; its full sequence is Glycerate kinase (378 aa).

Belongs to the glycerate kinase type-1 family.

The enzyme catalyses (R)-glycerate + ATP = (2R)-3-phosphoglycerate + ADP + H(+). This Haemophilus influenzae (strain ATCC 51907 / DSM 11121 / KW20 / Rd) protein is Glycerate kinase (glxK).